Here is a 226-residue protein sequence, read N- to C-terminus: Large ribosomal subunit protein uL1 (226 aa).

It belongs to the universal ribosomal protein uL1 family. In terms of assembly, part of the 50S ribosomal subunit.

Functionally, binds directly to 23S rRNA. The L1 stalk is quite mobile in the ribosome, and is involved in E site tRNA release. In terms of biological role, protein L1 is also a translational repressor protein, it controls the translation of the L11 operon by binding to its mRNA. The protein is Large ribosomal subunit protein uL1 of Mycoplasma genitalium (strain ATCC 33530 / DSM 19775 / NCTC 10195 / G37) (Mycoplasmoides genitalium).